We begin with the raw amino-acid sequence, 443 residues long: ATP-dependent protease ATPase subunit HslU (443 aa).

ATP-binding positions include Ile18, 60–65 (GVGKTE), Asp256, Glu321, and Arg393.

It belongs to the ClpX chaperone family. HslU subfamily. In terms of assembly, a double ring-shaped homohexamer of HslV is capped on each side by a ring-shaped HslU homohexamer. The assembly of the HslU/HslV complex is dependent on binding of ATP.

It is found in the cytoplasm. Its function is as follows. ATPase subunit of a proteasome-like degradation complex; this subunit has chaperone activity. The binding of ATP and its subsequent hydrolysis by HslU are essential for unfolding of protein substrates subsequently hydrolyzed by HslV. HslU recognizes the N-terminal part of its protein substrates and unfolds these before they are guided to HslV for hydrolysis. The sequence is that of ATP-dependent protease ATPase subunit HslU from Shigella dysenteriae serotype 1 (strain Sd197).